A 319-amino-acid polypeptide reads, in one-letter code: Phosphate acyltransferase (319 aa).

It belongs to the PlsX family. Homodimer. Probably interacts with PlsY.

It is found in the cytoplasm. It catalyses the reaction a fatty acyl-[ACP] + phosphate = an acyl phosphate + holo-[ACP]. It participates in lipid metabolism; phospholipid metabolism. Its function is as follows. Catalyzes the reversible formation of acyl-phosphate (acyl-PO(4)) from acyl-[acyl-carrier-protein] (acyl-ACP). This enzyme utilizes acyl-ACP as fatty acyl donor, but not acyl-CoA. The sequence is that of Phosphate acyltransferase from Chlamydia muridarum (strain MoPn / Nigg).